A 195-amino-acid polypeptide reads, in one-letter code: Probable GTP-binding protein EngB (195 aa).

The EngB-type G domain maps to 22-195 (GRPEVALAGR…WAALLPFLTE (174 aa)). GTP is bound by residues 30 to 37 (GRSNVGKS), 57 to 61 (GKTQT), 75 to 78 (DVPG), 142 to 145 (TKAD), and 174 to 176 (FSS). Residues Ser37 and Thr59 each coordinate Mg(2+).

Belongs to the TRAFAC class TrmE-Era-EngA-EngB-Septin-like GTPase superfamily. EngB GTPase family. Requires Mg(2+) as cofactor.

Functionally, necessary for normal cell division and for the maintenance of normal septation. The chain is Probable GTP-binding protein EngB from Geobacillus thermodenitrificans (strain NG80-2).